A 356-amino-acid chain; its full sequence is Tyrosine recombinase XerS (356 aa).

The Core-binding (CB) domain maps to 16–121 (LMPWYVLEYY…ALSSLYKYLT (106 aa)). The Tyr recombinase domain occupies 169-354 (EFLEYVDCEY…VNDEQKNALD (186 aa)). Catalysis depends on residues R210, K234, H306, R309, and H332. Y341 serves as the catalytic O-(3'-phospho-DNA)-tyrosine intermediate.

It belongs to the 'phage' integrase family. XerS subfamily.

It localises to the cytoplasm. Its activity is regulated as follows. FtsK is required for recombination. Functionally, site-specific tyrosine recombinase, which acts by catalyzing the cutting and rejoining of the recombining DNA molecules. Essential to convert dimers of the bacterial chromosome into monomers to permit their segregation at cell division. The chain is Tyrosine recombinase XerS from Streptococcus mutans serotype c (strain ATCC 700610 / UA159).